Consider the following 174-residue polypeptide: 3-hydroxydecanoyl-[acyl-carrier-protein] dehydratase (174 aa).

The active site involves H71.

The protein belongs to the thioester dehydratase family. FabA subfamily. As to quaternary structure, homodimer.

It localises to the cytoplasm. It carries out the reaction a (3R)-hydroxyacyl-[ACP] = a (2E)-enoyl-[ACP] + H2O. The catalysed reaction is (3R)-hydroxydecanoyl-[ACP] = (2E)-decenoyl-[ACP] + H2O. It catalyses the reaction (2E)-decenoyl-[ACP] = (3Z)-decenoyl-[ACP]. It functions in the pathway lipid metabolism; fatty acid biosynthesis. In terms of biological role, necessary for the introduction of cis unsaturation into fatty acids. Catalyzes the dehydration of (3R)-3-hydroxydecanoyl-ACP to E-(2)-decenoyl-ACP and then its isomerization to Z-(3)-decenoyl-ACP. Can catalyze the dehydratase reaction for beta-hydroxyacyl-ACPs with saturated chain lengths up to 16:0, being most active on intermediate chain length. The polypeptide is 3-hydroxydecanoyl-[acyl-carrier-protein] dehydratase (Nitrobacter winogradskyi (strain ATCC 25391 / DSM 10237 / CIP 104748 / NCIMB 11846 / Nb-255)).